We begin with the raw amino-acid sequence, 356 residues long: S-adenosylmethionine:tRNA ribosyltransferase-isomerase (356 aa).

This sequence belongs to the QueA family. Monomer.

It localises to the cytoplasm. The enzyme catalyses 7-aminomethyl-7-carbaguanosine(34) in tRNA + S-adenosyl-L-methionine = epoxyqueuosine(34) in tRNA + adenine + L-methionine + 2 H(+). It functions in the pathway tRNA modification; tRNA-queuosine biosynthesis. Its function is as follows. Transfers and isomerizes the ribose moiety from AdoMet to the 7-aminomethyl group of 7-deazaguanine (preQ1-tRNA) to give epoxyqueuosine (oQ-tRNA). In Escherichia coli O6:K15:H31 (strain 536 / UPEC), this protein is S-adenosylmethionine:tRNA ribosyltransferase-isomerase.